We begin with the raw amino-acid sequence, 53 residues long: uncharacterized protein (53 aa).

This is an uncharacterized protein from Saccharomyces cerevisiae (strain ATCC 204508 / S288c) (Baker's yeast).